A 228-amino-acid polypeptide reads, in one-letter code: Endolytic peptidoglycan transglycosylase RlpA (228 aa).

The signal sequence occupies residues 1-23; sequence MIQRHKLIVLIFLLIFCLSGCNT.

This sequence belongs to the RlpA family.

In terms of biological role, lytic transglycosylase with a strong preference for naked glycan strands that lack stem peptides. The chain is Endolytic peptidoglycan transglycosylase RlpA from Rickettsia felis (strain ATCC VR-1525 / URRWXCal2) (Rickettsia azadi).